Here is a 467-residue protein sequence, read N- to C-terminus: UDP-N-acetylmuramate--L-alanine ligase (467 aa).

114 to 120 (GTHGKTT) contacts ATP.

The protein belongs to the MurCDEF family.

It localises to the cytoplasm. It carries out the reaction UDP-N-acetyl-alpha-D-muramate + L-alanine + ATP = UDP-N-acetyl-alpha-D-muramoyl-L-alanine + ADP + phosphate + H(+). The protein operates within cell wall biogenesis; peptidoglycan biosynthesis. Cell wall formation. This chain is UDP-N-acetylmuramate--L-alanine ligase, found in Rhodopseudomonas palustris (strain ATCC BAA-98 / CGA009).